The primary structure comprises 180 residues: Shikimate kinase (180 aa).

Residue 14-19 participates in ATP binding; that stretch reads GAGKST. S18 serves as a coordination point for Mg(2+). Substrate contacts are provided by D36, R60, and G82. An ATP-binding site is contributed by R120. R140 is a substrate binding site. Residue Q157 coordinates ATP.

Belongs to the shikimate kinase family. In terms of assembly, monomer. Mg(2+) serves as cofactor.

It localises to the cytoplasm. It carries out the reaction shikimate + ATP = 3-phosphoshikimate + ADP + H(+). It participates in metabolic intermediate biosynthesis; chorismate biosynthesis; chorismate from D-erythrose 4-phosphate and phosphoenolpyruvate: step 5/7. In terms of biological role, catalyzes the specific phosphorylation of the 3-hydroxyl group of shikimic acid using ATP as a cosubstrate. The sequence is that of Shikimate kinase from Haemophilus influenzae (strain PittEE).